Consider the following 210-residue polypeptide: Orotate phosphoribosyltransferase (210 aa).

5-phospho-alpha-D-ribose 1-diphosphate contacts are provided by residues Arg-94, Lys-98, His-100, and 120-128; that span reads EDLISTGGS. Ser-124 is an orotate binding site.

Belongs to the purine/pyrimidine phosphoribosyltransferase family. PyrE subfamily. As to quaternary structure, homodimer. The cofactor is Mg(2+).

It carries out the reaction orotidine 5'-phosphate + diphosphate = orotate + 5-phospho-alpha-D-ribose 1-diphosphate. It functions in the pathway pyrimidine metabolism; UMP biosynthesis via de novo pathway; UMP from orotate: step 1/2. Its function is as follows. Catalyzes the transfer of a ribosyl phosphate group from 5-phosphoribose 1-diphosphate to orotate, leading to the formation of orotidine monophosphate (OMP). In Bacillus cereus (strain B4264), this protein is Orotate phosphoribosyltransferase.